A 401-amino-acid chain; its full sequence is MTLPKIKHVRAWFIGGATAEQGAGGGDYHDQGANHWIDDHIATPMSKYKQYEQSRQSFGINVLGTLIVEVEADNGQTGFAVSTAGEMGCFIVEKHLNRFIEGKCVSDIKLIHDQMLNATLYYAGSGGLVMNTISCVDLALWDLFGKVVGLPVYKLLGGAVRDEIQFYATGARPDLAQEMGFIGGKMPTHWGPHDGDAGIRKDVAMVADMREKCGPDFWLMLDCWMSQDVNYATKLAHACAPYNLKWIEECLPPQQYEGYRELKRQAPAGMMVTSGEHHGTLQSFRTLSETGIDIMQPDVGWCGGLTTLVEIAAIAKARGQLVVPHGSSVYSHHAVITFTNTPFSEFLMTSPDCATLRPQFDPILLGEPVPERGRIHKSVLDKPGFGVELNRDCNLKRPYQH.

The substrate site is built by H29 and R55. 3 residues coordinate Mg(2+): D222, E248, and E276. H325 acts as the Proton acceptor in catalysis. E345 is a substrate binding site.

The protein belongs to the mandelate racemase/muconate lactonizing enzyme family. RhamD subfamily. As to quaternary structure, homooctamer; tetramer of dimers. Mg(2+) is required as a cofactor.

It carries out the reaction L-rhamnonate = 2-dehydro-3-deoxy-L-rhamnonate + H2O. Catalyzes the dehydration of L-rhamnonate to 2-keto-3-deoxy-L-rhamnonate (KDR). The sequence is that of L-rhamnonate dehydratase from Klebsiella pneumoniae subsp. pneumoniae (strain ATCC 700721 / MGH 78578).